Reading from the N-terminus, the 1532-residue chain is Multidrug resistance-associated protein 1 (1532 aa).

The Extracellular portion of the chain corresponds to 1-33; sequence MALSSFCSSDGSDPLWDWNVTWHTSNPDFTKCF. A glycan (N-linked (GlcNAc...) asparagine) is linked at asparagine 19. The helical transmembrane segment at 34 to 54 threads the bilayer; it reads QNTVLTWVPCFYLWSCFPLYF. Residues 55-74 lie on the Cytoplasmic side of the membrane; it reads LYLSRHDRGYIQMTHLNKAK. A helical membrane pass occupies residues 75-95; sequence TALGFFLWIICWADLFYSFWE. The Extracellular portion of the chain corresponds to 96-100; that stretch reads RSQGM. Residues 101–121 form a helical membrane-spanning segment; the sequence is LLAPVLLVSPTLLGITMLLAT. Over 122 to 133 the chain is Cytoplasmic; the sequence is FLIQFERRKGVQ. The chain crosses the membrane as a helical span at residues 134–154; sequence SSGIMLTFWLVALLCALAILR. At 155-172 the chain is on the extracellular side; the sequence is SKIISALKKDAQVDMFRD. A helical transmembrane segment spans residues 173-193; the sequence is SAFYLYFTLVFIQLVLSCFSD. Over 194-317 the chain is Cytoplasmic; sequence SSPLFSETVR…KDRDPSLFKV (124 aa). A Phosphotyrosine modification is found at tyrosine 277. Serine 290 bears the Phosphoserine mark. A helical transmembrane segment spans residues 318-338; sequence LYKTFGPYFLMSFLYKALHDL. One can recognise an ABC transmembrane type-1 1 domain in the interval 326–609; sequence FLMSFLYKAL…LPMVISSIVQ (284 aa). Residues 339–364 lie on the Extracellular side of the membrane; sequence MMFAGPEILELIINFVNDREAPDWQG. A helical membrane pass occupies residues 365-385; it reads YLYTALLFVSACLQTLALHQY. Topologically, residues 386 to 441 are cytoplasmic; sequence FHICFVTGMRIKTAVVGAVYRKALVITNSARKSSTVGEIVNLMSVDAQRFMDLATY. The helical transmembrane segment at 442–462 threads the bilayer; it reads INMIWSAPLQVTLALYFLWLN. Residues 463–465 are Extracellular-facing; the sequence is LGP. Residues 466–486 traverse the membrane as a helical segment; that stretch reads SVLAGVAVMILMVPFNAVMAM. The Cytoplasmic portion of the chain corresponds to 487 to 548; sequence KTKTYQVAHM…VLKKSAYLAA (62 aa). Lysine 504 bears the N6-succinyllysine mark. A helical transmembrane segment spans residues 549 to 569; it reads VGTFTWVCTPFLVALSTFAVF. Over 570-591 the chain is Extracellular; the sequence is VTVDEKNILDAKKAFVSLALFN. A helical membrane pass occupies residues 592 to 612; it reads ILRFPLNILPMVISSIVQASV. Over 613–967 the chain is Cytoplasmic; the sequence is SLKRLRIFLS…VKLSVYWNYM (355 aa). The 225-residue stretch at 645–869 folds into the ABC transporter 1 domain; the sequence is ITVKNATFTW…DGAFAEFVRT (225 aa). Position 679–686 (679–686) interacts with ATP; that stretch reads GQVGCGKS. A phosphoserine mark is found at serine 879, serine 883, serine 916, and serine 931. Residues 968-988 form a helical membrane-spanning segment; sequence KAIGLCISFLSIFLFLCNHVS. The ABC transmembrane type-1 2 domain occupies 975 to 1257; that stretch reads SFLSIFLFLC…LVRMSSEMET (283 aa). Topologically, residues 989-1026 are extracellular; the sequence is ALASNYWLSLWTDDRPAVNGTQENRNFRLSVYGALGIL. A helical membrane pass occupies residues 1027–1047; that stretch reads QGVAVFGYSMAVSIGGIFASR. Residues 1048–1090 are Cytoplasmic-facing; the sequence is RLHLDLLQNVLRSPMSFFERTPSGNLVNRFSKELDTVDSMIPQ. The chain crosses the membrane as a helical span at residues 1091–1111; it reads VIKMFMGSLFSVIGAVIIILL. Position 1112 (alanine 1112) is a topological domain, extracellular. A helical transmembrane segment spans residues 1113 to 1133; that stretch reads TPIAAVIIPPLGLVYFFVQRF. The Cytoplasmic segment spans residues 1134 to 1204; it reads YVASSRQLKR…VANRWLAVRL (71 aa). The chain crosses the membrane as a helical span at residues 1205–1225; the sequence is ECVGNCIVLFAALFAVISRHS. The Extracellular portion of the chain corresponds to 1226 to 1227; the sequence is LS. The helical transmembrane segment at 1228-1248 threads the bilayer; sequence AGLVGLSVSYSLQITAYLNWL. The Cytoplasmic portion of the chain corresponds to 1249 to 1532; that stretch reads VRMSSEMETN…YSMAKDAGLV (284 aa). Positions 1294 to 1528 constitute an ABC transporter 2 domain; that stretch reads VEFRDYCLRY…RGVFYSMAKD (235 aa). 1328–1335 provides a ligand contact to ATP; the sequence is GRTGAGKS.

The protein belongs to the ABC transporter superfamily. ABCC family. Conjugate transporter (TC 3.A.1.208) subfamily. Post-translationally, glycosylated. In terms of tissue distribution, skeletal muscle, brain, heart, spleen, lung and kidney.

The protein resides in the cell membrane. It is found in the basolateral cell membrane. The catalysed reaction is ATP + H2O + xenobioticSide 1 = ADP + phosphate + xenobioticSide 2.. It carries out the reaction an S-substituted glutathione(in) + ATP + H2O = an S-substituted glutathione(out) + ADP + phosphate + H(+). It catalyses the reaction sphing-4-enine 1-phosphate(in) + ATP + H2O = sphing-4-enine 1-phosphate(out) + ADP + phosphate + H(+). The enzyme catalyses leukotriene C4(in) + ATP + H2O = leukotriene C4(out) + ADP + phosphate + H(+). The catalysed reaction is 17beta-estradiol 17-O-(beta-D-glucuronate)(in) + ATP + H2O = 17beta-estradiol 17-O-(beta-D-glucuronate)(out) + ADP + phosphate + H(+). It carries out the reaction daunorubicin(in) + ATP + H2O = daunorubicin(out) + ADP + phosphate + H(+). It catalyses the reaction vincristine(in) + ATP + H2O = vincristine(out) + ADP + phosphate + H(+). The enzyme catalyses 2',3'-cGAMP(in) + ATP + H2O = 2',3'-cGAMP(out) + ADP + phosphate + H(+). The catalysed reaction is S-[(2E,6E,10E)-geranylgeranyl]-L-glutathione(in) + ATP + H2O = S-[(2E,6E,10E)-geranylgeranyl]-L-glutathione(out) + ADP + phosphate + H(+). It carries out the reaction prostaglandin A2-S-(R)-glutathione(in) + ATP + H2O = prostaglandin A2-S-(R)-glutathione(out) + ADP + phosphate + H(+). It catalyses the reaction prostaglandin A2-S-(S)-glutathione(in) + ATP + H2O = prostaglandin A2-S-(S)-glutathione(out) + ADP + phosphate + H(+). With respect to regulation, MK 571 inhibits sphingosine 1-phosphate and leukotriene C4 export. Functionally, mediates export of organic anions and drugs from the cytoplasm. Mediates ATP-dependent transport of glutathione and glutathione conjugates, leukotriene C4, estradiol-17-beta-o-glucuronide, methotrexate, antiviral drugs and other xenobiotics. Confers resistance to anticancer drugs by decreasing accumulation of drug in cells, and by mediating ATP- and GSH-dependent drug export. Hydrolyzes ATP with low efficiency. Catalyzes the export of sphingosine 1-phosphate from mast cells independently of their degranulation. Participates in inflammatory response by allowing export of leukotriene C4 from leukotriene C4-synthesizing cells. Exports S-geranylgeranyl-glutathione (GGG) in lymphoid cells and stromal compartments of lymphoid organs. ABCC1 (via extracellular transport) with GGT5 (via GGG catabolism) establish GGG gradients within lymphoid tissues to position P2RY8-positive lymphocytes at germinal centers in lymphoid follicles and restrict their chemotactic transmigration from blood vessels to the bone marrow parenchyma. Mediates basolateral export of GSH-conjugated R- and S-prostaglandin A2 diastereomers in polarized epithelial cells. In Rattus norvegicus (Rat), this protein is Multidrug resistance-associated protein 1.